We begin with the raw amino-acid sequence, 207 residues long: Small ribosomal subunit protein uS4c (207 aa).

The tract at residues 20 to 52 (GFSKKIDRNHTPPGQHGWKKKASDQKKSKESQY) is disordered. A compositionally biased stretch (basic and acidic residues) spans 40 to 52 (KASDQKKSKESQY). The 62-residue stretch at 97–158 (MRLDNIIYRL…NSQQLIKNYL (62 aa)) folds into the S4 RNA-binding domain.

It belongs to the universal ribosomal protein uS4 family. In terms of assembly, part of the 30S ribosomal subunit. Contacts protein S5. The interaction surface between S4 and S5 is involved in control of translational fidelity.

The protein resides in the plastid. Functionally, one of the primary rRNA binding proteins, it binds directly to 16S rRNA where it nucleates assembly of the body of the 30S subunit. Its function is as follows. With S5 and S12 plays an important role in translational accuracy. The protein is Small ribosomal subunit protein uS4c (rps4) of Prototheca wickerhamii.